Here is a 475-residue protein sequence, read N- to C-terminus: Sulfate adenylyltransferase subunit 1 (475 aa).

The region spanning 25 to 240 (KSLLRFLTCG…VLETVEVINL (216 aa)) is the tr-type G domain. Residues 34-41 (GSVDDGKS) form a G1 region. 34-41 (GSVDDGKS) provides a ligand contact to GTP. The G2 stretch occupies residues 92-96 (GITID). The G3 stretch occupies residues 113 to 116 (DTPG). GTP contacts are provided by residues 113–117 (DTPGH) and 168–171 (NKMD). Residues 168-171 (NKMD) form a G4 region. Positions 206–208 (SAL) are G5.

It belongs to the TRAFAC class translation factor GTPase superfamily. Classic translation factor GTPase family. CysN/NodQ subfamily. As to quaternary structure, heterodimer composed of CysD, the smaller subunit, and CysN.

The catalysed reaction is sulfate + ATP + H(+) = adenosine 5'-phosphosulfate + diphosphate. Its pathway is sulfur metabolism; hydrogen sulfide biosynthesis; sulfite from sulfate: step 1/3. Its function is as follows. With CysD forms the ATP sulfurylase (ATPS) that catalyzes the adenylation of sulfate producing adenosine 5'-phosphosulfate (APS) and diphosphate, the first enzymatic step in sulfur assimilation pathway. APS synthesis involves the formation of a high-energy phosphoric-sulfuric acid anhydride bond driven by GTP hydrolysis by CysN coupled to ATP hydrolysis by CysD. The chain is Sulfate adenylyltransferase subunit 1 from Sodalis glossinidius (strain morsitans).